Consider the following 315-residue polypeptide: Olfactory receptor 8J3 (315 aa).

The Extracellular segment spans residues 1 to 25 (MAPENFTRVTEFILTGVSSCPELQI). A glycan (N-linked (GlcNAc...) asparagine) is linked at Asn-5. The chain crosses the membrane as a helical span at residues 26-46 (PLFLVFLVLYVLTMAGNLGII). The Cytoplasmic segment spans residues 47-54 (TLTSVDSR). A helical membrane pass occupies residues 55–75 (LQNPMYFFLRHLAIINLGNST). Over 76-99 (VIAPKMLMNFLVKKKTTSFYECAT) the chain is Extracellular. Cys-97 and Cys-189 are joined by a disulfide. A helical transmembrane segment spans residues 100-120 (QLGGFLFFIVSEVMMLAVMAY). Residues 121–139 (DRYVAICNPLLYMVVVSRR) lie on the Cytoplasmic side of the membrane. A helical transmembrane segment spans residues 140 to 160 (LCLLLVSLTYLYGFSTAIVVS). Over 161–197 (PCIFSVSYCSSNIINHFYCDIAPLLALSCSDTYIPET) the chain is Extracellular. Residues 198–217 (IVFISAATNLVFSMITVLVS) form a helical membrane-spanning segment. Topologically, residues 218–237 (YFNIVLSILRIRSPEGRKKA) are cytoplasmic. A helical transmembrane segment spans residues 238–258 (FSTCASHMIAVTVFYGTMLFM). Topologically, residues 259 to 271 (YLQPQTNHSLDTD) are extracellular. Residue Asn-265 is glycosylated (N-linked (GlcNAc...) asparagine). A helical membrane pass occupies residues 272–292 (KMASVFYTLVIPMLNPLIYSL). Residues 293-315 (RNNDVNVALKKFMENPCYSFKSM) lie on the Cytoplasmic side of the membrane.

This sequence belongs to the G-protein coupled receptor 1 family.

It is found in the cell membrane. Odorant receptor. The protein is Olfactory receptor 8J3 (OR8J3) of Homo sapiens (Human).